A 213-amino-acid polypeptide reads, in one-letter code: Ras-related protein Rab-39B (213 aa).

GTP-binding residues include S17, G20, K21, S22, C23, S37, and T40. S22 provides a ligand contact to Mg(2+). Positions 35–43 (QVSDPTVGV) are switch-I. Positions 40 and 64 each coordinate Mg(2+). Positions 67, 123, 124, 126, 154, and 155 each coordinate GTP. Residues 67-83 (GQERFRSITRAYYRNSV) form a switch-II region. S201 bears the Phosphoserine mark. 2 S-geranylgeranyl cysteine lipidation sites follow: C211 and C213. A Cysteine methyl ester modification is found at C213.

This sequence belongs to the small GTPase superfamily. Rab family. Interacts (GDP-bound) with C9orf72; C9orf72 in complex with SMCR8 acts as a GEF for RAB39B. Interacts (in GTP-bound form) with PICK1 (via PDZ domain); a PICK1 homodimer may allow simultaneous association of RAB39B and GRIA2 to PICK1 which is involved in GRIA2 trafficking. Interacts with isoform c of RASSF1; the interaction is strong. Interacts with isoform a of RASSF1; the interaction is weak. Interacts with the DLG4/PSD-95. Interacts (GTP-bound) with HOPS complex components VPS39 and VPS41. Mg(2+) is required as a cofactor.

Its subcellular location is the cell membrane. It localises to the cytoplasmic vesicle membrane. It is found in the golgi apparatus. The protein resides in the cytoplasmic vesicle. The protein localises to the autophagosome membrane. Its subcellular location is the autolysosome membrane. The catalysed reaction is GTP + H2O = GDP + phosphate + H(+). Its activity is regulated as follows. Regulated by guanine nucleotide exchange factors (GEFs) including C9orf72-SMCR8 complex, which promote the exchange of bound GDP for free GTP. Regulated by GTPase activating proteins (GAPs) which increase the GTP hydrolysis activity. Inhibited by GDP dissociation inhibitors (GDIs). The small GTPases Rab are key regulators of intracellular membrane trafficking, from the formation of transport vesicles to their fusion with membranes. Rabs cycle between an inactive GDP-bound form and an active GTP-bound form that is able to recruit to membranes different sets of downstream effectors directly responsible for vesicle formation, movement, tethering and fusion. RAB39B is involved in autophagy and may function in autophagosome formation. Binds downstream effector PICK1 to ensure selectively GRIA2 exit from the endoplasmic reticulum to the Golgi and to regulate AMPAR composition at the post-synapses and thus synaptic transmission. May regulate the homeostasis of SNCA/alpha-synuclein. This chain is Ras-related protein Rab-39B (RAB39B), found in Bos taurus (Bovine).